We begin with the raw amino-acid sequence, 264 residues long: Indole-3-glycerol phosphate synthase (264 aa).

Belongs to the TrpC family.

The enzyme catalyses 1-(2-carboxyphenylamino)-1-deoxy-D-ribulose 5-phosphate + H(+) = (1S,2R)-1-C-(indol-3-yl)glycerol 3-phosphate + CO2 + H2O. Its pathway is amino-acid biosynthesis; L-tryptophan biosynthesis; L-tryptophan from chorismate: step 4/5. This chain is Indole-3-glycerol phosphate synthase, found in Xylella fastidiosa (strain 9a5c).